Here is a 159-residue protein sequence, read N- to C-terminus: MRKLPITREGYCKLQEELEKLVKVVKPSVVAAVAQARELGDLSENAEYHEARKEQSFVEGKIRELQLCLSEAEVIDVSQFTGERVKFGASVTLENMESKSVLIYQIVGNLESDIKEGKISVSSPIGKAVMNKEVGEIVEIDLPSGKKTYKILGVEFRQS.

Residues 45–67 (NAEYHEARKEQSFVEGKIRELQL) adopt a coiled-coil conformation.

This sequence belongs to the GreA/GreB family.

Necessary for efficient RNA polymerase transcription elongation past template-encoded arresting sites. The arresting sites in DNA have the property of trapping a certain fraction of elongating RNA polymerases that pass through, resulting in locked ternary complexes. Cleavage of the nascent transcript by cleavage factors such as GreA or GreB allows the resumption of elongation from the new 3'terminus. GreA releases sequences of 2 to 3 nucleotides. The protein is Transcription elongation factor GreA of Neorickettsia sennetsu (strain ATCC VR-367 / Miyayama) (Ehrlichia sennetsu).